The following is a 365-amino-acid chain: IgG receptor FcRn large subunit p51 (365 aa).

The signal sequence occupies residues 1 to 21; that stretch reads MGMPLPWALSLLLVLLPQTWG. The segment at 22-110 is alpha-1; it reads SETRPPLMYH…KTLEKILNGT (89 aa). The Extracellular portion of the chain corresponds to 22–297; it reads SETRPPLMYH…VDLDSSARSS (276 aa). N-linked (GlcNAc...) asparagine glycans are attached at residues asparagine 108, asparagine 125, asparagine 149, and asparagine 246. Positions 111 to 200 are alpha-2; that stretch reads YTLQGLLGCE…ERGRRNLEWK (90 aa). Intrachain disulfides connect cysteine 119-cysteine 182 and cysteine 221-cysteine 275. The segment at 201-290 is alpha-3; the sequence is EPPSMRLKAR…GLAQPLTVDL (90 aa). The 88-residue stretch at 202–289 folds into the Ig-like C1-type domain; the sequence is PPSMRLKARP…EGLAQPLTVD (88 aa). Positions 291 to 297 are connecting peptide; it reads DSSARSS. The chain crosses the membrane as a helical span at residues 298–321; the sequence is VPVVGIVLGLLLVVVAIAGGVLLW. Topologically, residues 322–365 are cytoplasmic; sequence GRMRSGLPAPWLSLSGDDSGDLLPGGNLPPEAEPQGANAFPATS. The residue at position 334 (serine 334) is a Phosphoserine. Residues 343–365 are disordered; that stretch reads LLPGGNLPPEAEPQGANAFPATS.

The protein belongs to the immunoglobulin superfamily. As to quaternary structure, fcRn complex consists of two subunits: p51, and p14 which is equivalent to beta-2-microglobulin. It forms an MHC class I-like heterodimer. Interacts with albumin/ALB; this interaction regulates ALB homeostasis. Intestinal epithelium of suckling rodents. Expressed in neonatal intestine and fetal yolk sac.

The protein localises to the cell membrane. It is found in the endosome membrane. Functionally, cell surface receptor that transfers passive humoral immunity from the mother to the newborn. Binds to the Fc region of monomeric immunoglobulin gamma and mediates its selective uptake from milk. IgG in the milk is bound at the apical surface of the intestinal epithelium. The resultant FcRn-IgG complexes are transcytosed across the intestinal epithelium and IgG is released from FcRn into blood or tissue fluids. Throughout life, contributes to effective humoral immunity by recycling IgG and extending its half-life in the circulation. Mechanistically, monomeric IgG binding to FcRn in acidic endosomes of endothelial and hematopoietic cells recycles IgG to the cell surface where it is released into the circulation. In addition of IgG, regulates homeostasis of the other most abundant circulating protein albumin/ALB. This is IgG receptor FcRn large subunit p51 (Fcgrt) from Mus musculus (Mouse).